Consider the following 399-residue polypeptide: Bombesin receptor subtype-3 (399 aa).

Residues 1 to 41 (MSQRQSQSPNQTLISITNDTETSSSVVSNDTTHKGWTGDNS) are Extracellular-facing. N-linked (GlcNAc...) asparagine glycans are attached at residues Asn-10, Asn-18, and Asn-29. The helical transmembrane segment at 42 to 63 (PGIEALCAIYITYAGIISVGIL) threads the bilayer. Over 64-82 (GNAILIKVFFKTKSMQTVP) the chain is Cytoplasmic. The chain crosses the membrane as a helical span at residues 83–103 (NIFITSLAFGDLLLLLTCVPV). The Extracellular segment spans residues 104-121 (DATHYLAEGWLFGKVGCK). An intrachain disulfide couples Cys-120 to Cys-203. The chain crosses the membrane as a helical span at residues 122 to 143 (VLSFIRLTSVGVSVFTLTILSA). Over 144-163 (DRYKAVVKPLERQPPNAILK) the chain is Cytoplasmic. The helical transmembrane segment at 164 to 184 (TCAKAGGIWIVSMIFALPEAI) threads the bilayer. Over 185 to 220 (FSNVYTFQDPNRNVTFESCNSYPISERLLQEIHSLL) the chain is Extracellular. The helical transmembrane segment at 221–241 (CFLVFYIIPLSIISVYYSLIA) threads the bilayer. Residues 242–272 (RTLYKSTLNIPTEEQSHARKQIESRKRIAKT) are Cytoplasmic-facing. A helical transmembrane segment spans residues 273–293 (VLVLVALFALCWLPNHLLYLY). Over 294-313 (HSFTYESYANHSDVPFVIII) the chain is Extracellular. The helical transmembrane segment at 314–333 (FSRVLAFSNSCVNPFALYWL) threads the bilayer. Residues 334 to 399 (SKTFQQHFKA…SSAKKGEDKV (66 aa)) are Cytoplasmic-facing. The S-palmitoyl cysteine moiety is linked to residue Cys-347.

It belongs to the G-protein coupled receptor 1 family. Interacts with C6orf89.

Its subcellular location is the cell membrane. Its function is as follows. Role in sperm cell division, maturation, or function. This receptor mediates its action by association with G proteins that activate a phosphatidylinositol-calcium second messenger system. In Mus musculus (Mouse), this protein is Bombesin receptor subtype-3 (Brs3).